We begin with the raw amino-acid sequence, 853 residues long: MSHANSEETMMNTAVAHPSTSKAKADKDILHTQIAQACEQACQAIAPTWPLDRAIAVNPHWSRIGMPVRKVAARMAVLGGIQVFPPRNLQRQAWDEGRVSAADLAQTLQQLPEAQAAGLSPGDCITALHSEPALEHLPLLIDVLDNDPNRHTRLSWRQAITHQVSQTCAAYFDEHQADWHPERTQGLYAFWRETLQHDHGIGLLMGLPHIGQAIDALPVTAQDAERWVLERLGLPQAVWADYLESVLLTVNGWASWCAYLGWQAKLENGEDAHLGELLAIRLAWGALLLECKDDKANDQAFVTLQRAWEHAPLLLLAAERALLVDEVWQVALEIGYQRELAAKLISAGKTAPGSQAIEVQAAFCIDVRSEPLRRALETAWPGIQTLGFAGFFGLPVAYTPLATQARRPQLPGLLAPAMEVVDSIISAEPEKRNADAALQSASVRSRQYRFAVTDQWKAGSRWPGAAFSFVEAAGLGYLGKIGQWLWPGLQPRSRDDLAGLPARHQSICRPHLIGVGLEAKIDLAARVLQGMGLTRELAPMVLLVGHGSQSANNAHAAGLDCGACCGQTGEVNARSLALLLNEPEVRQGLQAKGIAVPSHTVFVAALHNTTTDEIEGFDLDLMPEDARARWQTLQQVFAQAGNQVRRERSPSLQLDAQASDDALLEQLRRRANDGAQTRPEWGLAGNAAFIIAPRQRSLGIGLEGRSFLHDYDASQDTDGSVLELLMTAPMLVTHWINWQYHASTCDPQRLGSGNKLLHNVVGGNLGVFEGNGGDLRIGLSRQSLHDGKHWIHEPLRLTVVIEAPQAAIEAVIAKHAVVKQLVDNGWLHLWHVESSHLQRYDHGTWSKLELEQA.

The tract at residues 1-21 (MSHANSEETMMNTAVAHPSTS) is disordered. A compositionally biased stretch (polar residues) spans 7-21 (EETMMNTAVAHPSTS). Zn(2+)-binding residues include cysteine 364, aspartate 366, histidine 546, and cysteine 561.

It belongs to the inorganic carbon transporter (TC 9.A.2) DabA family. In terms of assembly, forms a complex with DabB. Zn(2+) is required as a cofactor.

It localises to the cell inner membrane. Part of an energy-coupled inorganic carbon pump. The protein is Probable inorganic carbon transporter subunit DabA of Methylovorus glucosotrophus (strain SIP3-4).